The sequence spans 534 residues: Arginine transporter 1 (534 aa).

A run of 6 helical transmembrane segments spans residues tyrosine 35–tryptophan 55, serine 99–leucine 119, alanine 126–glycine 146, proline 154–valine 174, alanine 182–leucine 202, and valine 216–isoleucine 236. N-linked (GlcNAc...) asparagine glycosylation is present at asparagine 246. A disordered region spans residues threonine 261–aspartate 302. A compositionally biased stretch (basic and acidic residues) spans asparagine 289–aspartate 302. Helical transmembrane passes span alanine 329–alanine 349, tyrosine 365–isoleucine 385, isoleucine 388–valine 408, phenylalanine 419–valine 439, leucine 451–glycine 471, and arginine 483–methionine 503.

It belongs to the SLC43A transporter (TC 2.A.1.44) family.

Its subcellular location is the cell membrane. The catalysed reaction is L-arginine(in) = L-arginine(out). In terms of biological role, selective L-arginine transporter that is essential for parasite survival and virulence. Does not require other inorganic ions such as sodium, chloride, potassium or calcium. The polypeptide is Arginine transporter 1 (Toxoplasma gondii (strain ATCC 50611 / Me49)).